Consider the following 251-residue polypeptide: Octanoyltransferase (251 aa).

A BPL/LPL catalytic domain is found at 56-241; the sequence is AETPDEIWIV…NLDGASAAAD (186 aa). Residues 96–103, 168–170, and 181–183 contribute to the substrate site; these read RGGQITYH, ALG, and GLS. Cys-199 functions as the Acyl-thioester intermediate in the catalytic mechanism.

It belongs to the LipB family.

It localises to the cytoplasm. It carries out the reaction octanoyl-[ACP] + L-lysyl-[protein] = N(6)-octanoyl-L-lysyl-[protein] + holo-[ACP] + H(+). Its pathway is protein modification; protein lipoylation via endogenous pathway; protein N(6)-(lipoyl)lysine from octanoyl-[acyl-carrier-protein]: step 1/2. Catalyzes the transfer of endogenously produced octanoic acid from octanoyl-acyl-carrier-protein onto the lipoyl domains of lipoate-dependent enzymes. Lipoyl-ACP can also act as a substrate although octanoyl-ACP is likely to be the physiological substrate. This Burkholderia vietnamiensis (strain G4 / LMG 22486) (Burkholderia cepacia (strain R1808)) protein is Octanoyltransferase.